The sequence spans 424 residues: Kynureninase (424 aa).

Pyridoxal 5'-phosphate is bound by residues L105, S106, 133 to 136, D218, H221, and Y243; that span reads FPTD. Residue K244 is modified to N6-(pyridoxal phosphate)lysine. 2 residues coordinate pyridoxal 5'-phosphate: W274 and N302.

Belongs to the kynureninase family. As to quaternary structure, homodimer. It depends on pyridoxal 5'-phosphate as a cofactor.

It catalyses the reaction L-kynurenine + H2O = anthranilate + L-alanine + H(+). It carries out the reaction 3-hydroxy-L-kynurenine + H2O = 3-hydroxyanthranilate + L-alanine + H(+). It participates in amino-acid degradation; L-kynurenine degradation; L-alanine and anthranilate from L-kynurenine: step 1/1. Its pathway is cofactor biosynthesis; NAD(+) biosynthesis; quinolinate from L-kynurenine: step 2/3. Catalyzes the cleavage of L-kynurenine (L-Kyn) and L-3-hydroxykynurenine (L-3OHKyn) into anthranilic acid (AA) and 3-hydroxyanthranilic acid (3-OHAA), respectively. This is Kynureninase from Stenotrophomonas maltophilia (strain K279a).